Reading from the N-terminus, the 263-residue chain is HTH-type transcriptional repressor NanR (263 aa).

The disordered stretch occupies residues 1 to 22; it reads MGLMNAFDSQTEDSSPAIGRNL. An HTH gntR-type domain is found at 30-98; it reads KKLSEMVEEE…NGERARVSRP (69 aa). The segment at residues 58–77 is a DNA-binding region (H-T-H motif); it reads ERELMAFFNVGRPSVREALA.

This sequence belongs to the NanR family.

In terms of biological role, transcriptional repressor that controls expression of the genes required for the catabolism of sialic acids. This chain is HTH-type transcriptional repressor NanR, found in Shigella boydii serotype 4 (strain Sb227).